The following is a 152-amino-acid chain: Transcriptional regulator MraZ (152 aa).

2 consecutive SpoVT-AbrB domains span residues 5 to 52 (ATMV…PLPE) and 81 to 124 (ASEC…DEQT).

Belongs to the MraZ family. In terms of assembly, forms oligomers.

The protein resides in the cytoplasm. The protein localises to the nucleoid. Functionally, negatively regulates its own expression and that of the subsequent genes in the proximal part of the division and cell wall (dcw) gene cluster. Acts by binding directly to DNA. May also regulate the expression of genes outside the dcw cluster. The sequence is that of Transcriptional regulator MraZ from Yersinia pestis bv. Antiqua (strain Antiqua).